The primary structure comprises 374 residues: DNA-directed RNA polymerase subunit alpha (374 aa).

Residues 1–270 (MIFDEDSSSV…DQFQQFINFD (270 aa)) are alpha N-terminal domain (alpha-NTD). Residues 282-374 (KDVLPYDSNL…ESLSKQYSEE (93 aa)) form an alpha C-terminal domain (alpha-CTD) region.

It belongs to the RNA polymerase alpha chain family. Homodimer. The RNAP catalytic core consists of 2 alpha, 1 beta, 1 beta' and 1 omega subunit. When a sigma factor is associated with the core the holoenzyme is formed, which can initiate transcription.

It carries out the reaction RNA(n) + a ribonucleoside 5'-triphosphate = RNA(n+1) + diphosphate. DNA-dependent RNA polymerase catalyzes the transcription of DNA into RNA using the four ribonucleoside triphosphates as substrates. The protein is DNA-directed RNA polymerase subunit alpha of Ehrlichia ruminantium (strain Welgevonden).